We begin with the raw amino-acid sequence, 367 residues long: 4-hydroxy-3-methylbut-2-en-1-yl diphosphate synthase (flavodoxin) (367 aa).

Positions 268, 271, 303, and 310 each coordinate [4Fe-4S] cluster.

The protein belongs to the IspG family. [4Fe-4S] cluster is required as a cofactor.

It carries out the reaction (2E)-4-hydroxy-3-methylbut-2-enyl diphosphate + oxidized [flavodoxin] + H2O + 2 H(+) = 2-C-methyl-D-erythritol 2,4-cyclic diphosphate + reduced [flavodoxin]. It participates in isoprenoid biosynthesis; isopentenyl diphosphate biosynthesis via DXP pathway; isopentenyl diphosphate from 1-deoxy-D-xylulose 5-phosphate: step 5/6. In terms of biological role, converts 2C-methyl-D-erythritol 2,4-cyclodiphosphate (ME-2,4cPP) into 1-hydroxy-2-methyl-2-(E)-butenyl 4-diphosphate. This chain is 4-hydroxy-3-methylbut-2-en-1-yl diphosphate synthase (flavodoxin), found in Shouchella clausii (strain KSM-K16) (Alkalihalobacillus clausii).